The sequence spans 332 residues: Putative threonine dehydratase (332 aa).

Lys-56 is subject to N6-(pyridoxal phosphate)lysine.

The protein belongs to the serine/threonine dehydratase family. Pyridoxal 5'-phosphate is required as a cofactor.

The enzyme catalyses L-threonine = 2-oxobutanoate + NH4(+). Its pathway is amino-acid biosynthesis; L-isoleucine biosynthesis; 2-oxobutanoate from L-threonine: step 1/1. This chain is Putative threonine dehydratase, found in Sinorhizobium fredii (strain NBRC 101917 / NGR234).